A 934-amino-acid chain; its full sequence is Serine/threonine-protein kinase KIPK1 (934 aa).

6 disordered regions span residues 20–40, 70–113, 189–227, 305–343, 395–438, and 466–493; these read LPKHSGRYGKSVMGSSSKDLV, RLMS…RFVG, PLMPVNDKPSSSKSVPQRFEDPSNPISEPSQAGTSFGLQ, SSSAVDSEQKGKLDDAPNSGTENGKTVRKVTRMIPRPKQ, SIDD…SCNV, and EKETENPTSSEKFEFSLSSKDSLGDYSR. Polar residues-rich tracts occupy residues 82 to 94 and 212 to 227; these read SASAGPSRTTSPS and NPISEPSQAGTSFGLQ. The segment covering 395 to 421 has biased composition (polar residues); that stretch reads SIDDNPPSYTSSHNPKICTDSLSSVSN. One can recognise a Protein kinase domain in the interval 538–879; sequence FNLLKKLGCG…SVEIKRHPFF (342 aa). ATP contacts are provided by residues 544 to 552 and K567; that span reads LGCGDIGTV. D663 serves as the catalytic Proton acceptor. Positions 738-773 are disordered; that stretch reads SSNQQQGRKPKRGDHLSKTQQHLSRSLPQLVAEPTE. Residues 755–764 show a composition bias toward polar residues; it reads KTQQHLSRSL.

This sequence belongs to the protein kinase superfamily. Ser/Thr protein kinase family. In terms of assembly, interacts with KCBP. Interacts with PERK8, PERK9, PERK10 and PERK13. Autophosphorylated. Expressed in roots, cauline leaves, flowers and siliques.

Its subcellular location is the cytoplasm. It localises to the nucleus. The catalysed reaction is L-seryl-[protein] + ATP = O-phospho-L-seryl-[protein] + ADP + H(+). The enzyme catalyses L-threonyl-[protein] + ATP = O-phospho-L-threonyl-[protein] + ADP + H(+). Its function is as follows. Could be involved in the negative regulation of root growth. The protein is Serine/threonine-protein kinase KIPK1 of Arabidopsis thaliana (Mouse-ear cress).